A 100-amino-acid polypeptide reads, in one-letter code: Aspartyl/glutamyl-tRNA(Asn/Gln) amidotransferase subunit C (100 aa).

This sequence belongs to the GatC family. In terms of assembly, heterotrimer of A, B and C subunits.

The catalysed reaction is L-glutamyl-tRNA(Gln) + L-glutamine + ATP + H2O = L-glutaminyl-tRNA(Gln) + L-glutamate + ADP + phosphate + H(+). The enzyme catalyses L-aspartyl-tRNA(Asn) + L-glutamine + ATP + H2O = L-asparaginyl-tRNA(Asn) + L-glutamate + ADP + phosphate + 2 H(+). In terms of biological role, allows the formation of correctly charged Asn-tRNA(Asn) or Gln-tRNA(Gln) through the transamidation of misacylated Asp-tRNA(Asn) or Glu-tRNA(Gln) in organisms which lack either or both of asparaginyl-tRNA or glutaminyl-tRNA synthetases. The reaction takes place in the presence of glutamine and ATP through an activated phospho-Asp-tRNA(Asn) or phospho-Glu-tRNA(Gln). The protein is Aspartyl/glutamyl-tRNA(Asn/Gln) amidotransferase subunit C of Streptococcus equi subsp. zooepidemicus (strain H70).